The chain runs to 412 residues: MSVPTHQQDLIALLEERGFVHQCTDRDGLAAHLAAGPATAYLGFDATADSLHVGHLQGLMLMRWLQKAGHRPLLLIGGATTRIGDPSFRDSSRPILTEAQIQANIDGIARVFSRYVELHDDSLVNNAEWLDGVGYLEFLDRVGRHFSINRLLTFDAIRQRLDREHSLSFLEFGYTLLQAYDFVELSRRRGCTLQLGGADQWANIINGVELSRRQGGAQLFGLTMPLLATSDGRKMGKSAQGAVWLNAERLAPFDFWQFWRNCDDRDVGRFLALFSELPMDEVRRLGALQGAELNEAKVVLANAATALAHGEHAARSAADAARGVFADGTRDSGLPVMKLSRARLAQGLSLTDLLLEHAIQPSRSAVRRLAAGGGLRLDGTPVSDPDTPLAGEVDGLRLSLGKKQHLHLRLED.

Position 41 (Y41) interacts with L-tyrosine. The 'HIGH' region motif lies at 46 to 55 (ATADSLHVGH). Positions 174 and 178 each coordinate L-tyrosine. Positions 234–238 (KMGKS) match the 'KMSKS' region motif. K237 lines the ATP pocket. The region spanning 348–411 (LSLTDLLLEH…KKQHLHLRLE (64 aa)) is the S4 RNA-binding domain.

The protein belongs to the class-I aminoacyl-tRNA synthetase family. TyrS type 1 subfamily. As to quaternary structure, homodimer.

The protein resides in the cytoplasm. The enzyme catalyses tRNA(Tyr) + L-tyrosine + ATP = L-tyrosyl-tRNA(Tyr) + AMP + diphosphate + H(+). Catalyzes the attachment of tyrosine to tRNA(Tyr) in a two-step reaction: tyrosine is first activated by ATP to form Tyr-AMP and then transferred to the acceptor end of tRNA(Tyr). In Pseudomonas aeruginosa (strain ATCC 15692 / DSM 22644 / CIP 104116 / JCM 14847 / LMG 12228 / 1C / PRS 101 / PAO1), this protein is Tyrosine--tRNA ligase 1.